Reading from the N-terminus, the 233-residue chain is Glutathione S-transferase U15 (233 aa).

A GST N-terminal domain is found at 5–85 (EEVKLLGTWY…YIDETWNSSG (81 aa)). Glutathione-binding positions include 15-16 (SP), 42-43 (SK), 56-57 (KV), and 69-70 (VS). The GST C-terminal domain occupies 92–219 (HPYDRALARF…VPDIDKVAKF (128 aa)). Phosphothreonine is present on threonine 158.

It belongs to the GST superfamily. Tau family.

The protein resides in the cytoplasm. It is found in the cytosol. It catalyses the reaction RX + glutathione = an S-substituted glutathione + a halide anion + H(+). In terms of biological role, may be involved in the conjugation of reduced glutathione to a wide number of exogenous and endogenous hydrophobic electrophiles and have a detoxification role against certain herbicides. The protein is Glutathione S-transferase U15 (GSTU15) of Arabidopsis thaliana (Mouse-ear cress).